The following is a 435-amino-acid chain: Methylenetetrahydrofolate--tRNA-(uracil-5-)-methyltransferase TrmFO (435 aa).

9 to 14 is a binding site for FAD; that stretch reads GAGLAG.

The protein belongs to the MnmG family. TrmFO subfamily. Requires FAD as cofactor.

Its subcellular location is the cytoplasm. It catalyses the reaction uridine(54) in tRNA + (6R)-5,10-methylene-5,6,7,8-tetrahydrofolate + NADH + H(+) = 5-methyluridine(54) in tRNA + (6S)-5,6,7,8-tetrahydrofolate + NAD(+). The catalysed reaction is uridine(54) in tRNA + (6R)-5,10-methylene-5,6,7,8-tetrahydrofolate + NADPH + H(+) = 5-methyluridine(54) in tRNA + (6S)-5,6,7,8-tetrahydrofolate + NADP(+). Its function is as follows. Catalyzes the folate-dependent formation of 5-methyl-uridine at position 54 (M-5-U54) in all tRNAs. In Staphylococcus saprophyticus subsp. saprophyticus (strain ATCC 15305 / DSM 20229 / NCIMB 8711 / NCTC 7292 / S-41), this protein is Methylenetetrahydrofolate--tRNA-(uracil-5-)-methyltransferase TrmFO.